The sequence spans 184 residues: Photosystem I assembly protein Ycf4 (184 aa).

2 helical membrane passes run 22–42 (FCWA…GTSS) and 57–77 (IIFF…LFIS).

It belongs to the Ycf4 family.

The protein resides in the plastid. Its subcellular location is the chloroplast thylakoid membrane. Functionally, seems to be required for the assembly of the photosystem I complex. The sequence is that of Photosystem I assembly protein Ycf4 from Olimarabidopsis pumila (Dwarf rocket).